The chain runs to 1241 residues: Interphotoreceptor matrix proteoglycan 2 (1241 aa).

The signal sequence occupies residues 1 to 28; that stretch reads MIMFLPLGRISLGILILFLTGGNLVSVS. The Extracellular segment spans residues 29–1104; that stretch reads EEIQDRMHAV…CEEFVSEPFV (1076 aa). T193 is a glycosylation site (O-linked (GalNAc...) threonine). The segment at 206 to 234 is disordered; sequence AASERSAASPQESISNEIENVTEQPTPPA. Over residues 211 to 229 the composition is skewed to polar residues; that stretch reads SAASPQESISNEIENVTEQ. N225 is a glycosylation site (N-linked (GlcNAc...) asparagine). O-linked (GalNAc...) threonine glycosylation occurs at T231. In terms of domain architecture, SEA 1 spans 235–349; the sequence is AEQIAEFSIQ…KPTAVYTISN (115 aa). A hyaluronan-binding motif involved in chondroitin sulfate A-binding region spans residues 255-263; that stretch reads RDPSSALYR. Residues N297, N316, and N366 are each glycosylated (N-linked (GlcNAc...) asparagine). O-linked (GalNAc...) threonine glycosylation is found at T429, T430, and T431. Low complexity predominate over residues 431 to 443; that stretch reads TISPFGFSSGPPS. Disordered stretches follow at residues 431–456 and 500–520; these read TISPFGFSSGPPSATGRELHSESTLG and VAPEGRTSGSSILEDDNTEES. T817 is a glycosylation site (O-linked (GalNAc...) threonine). N-linked (GlcNAc...) asparagine glycans are attached at residues N841, N945, and N959. An SEA 2 domain is found at 900 to 1013; sequence GALVVFFSLR…YSLDVESGDD (114 aa). 2 consecutive EGF-like domains span residues 1013-1054 and 1055-1096; these read DANP…LPCQ and SVCD…QHCE. 6 cysteine pairs are disulfide-bonded: C1017/C1028, C1022/C1039, C1041/C1053, C1057/C1070, C1064/C1080, and C1082/C1095. The interval 1083 to 1091 is hyaluronan-binding motif involved in chondroitin sulfate C-binding; the sequence is RVGSNWWYR. The helical transmembrane segment at 1105–1125 threads the bilayer; it reads IGITIASVVSLLLVASAVVFF. The Cytoplasmic portion of the chain corresponds to 1126–1241; that stretch reads LAKMLQAQNV…FVREHEMEEL (116 aa). A hyaluronan-binding motif involved in chondroitin sulfate A- and C-binding region spans residues 1128–1136; sequence KMLQAQNVR. A hyaluronan-binding motif involved in chondroitin sulfate C-binding region spans residues 1139 to 1145; it reads RQRPTNR. The segment at 1210–1218 is hyaluronan-binding motif involved in chondroitin sulfate A- and C-binding motif; sequence KEEIQERMR.

Expressed in the pineal gland and the outer layer of the retina.

The protein resides in the photoreceptor outer segment membrane. It localises to the photoreceptor inner segment membrane. It is found in the secreted. Its subcellular location is the extracellular space. The protein localises to the extracellular matrix. The protein resides in the interphotoreceptor matrix. In terms of biological role, chondroitin sulfate- and hyaluronan-binding proteoglycan involved in the organization of interphotoreceptor matrix; may participate in the maturation and maintenance of the light-sensitive photoreceptor outer segment. Binds heparin. The sequence is that of Interphotoreceptor matrix proteoglycan 2 (Impg2) from Rattus norvegicus (Rat).